Reading from the N-terminus, the 311-residue chain is Aquaporin NIP3-1 (311 aa).

Positions 1 to 34 are disordered; the sequence is MEMAAPNGGGAAGMSSPVNGASAPATPGTPAPLF. Over residues 20-34 the composition is skewed to low complexity; that stretch reads GASAPATPGTPAPLF. Transmembrane regions (helical) follow at residues 85-105 and 111-131; these read LGAE…APIV and GAIS…TIIL. Residues 142–144 carry the NPA 1 motif; the sequence is NPS. 3 helical membrane passes run 158 to 178, 202 to 222, and 226 to 246; these read LQVP…GFAL, AFFT…AVAT, and AVGE…ILIA. Residues 255 to 257 carry the NPA 2 motif; sequence NPV. The helical transmembrane segment at 273–293 threads the bilayer; sequence WIYLIAPTLGAVAGAGVYTAV.

The protein belongs to the MIP/aquaporin (TC 1.A.8) family. NIP (TC 1.A.8.12) subfamily. As to expression, expressed in roots and leaves.

It localises to the membrane. In terms of biological role, aquaporins facilitate the transport of water and small neutral solutes across cell membranes. This is Aquaporin NIP3-1 (NIP3-1) from Oryza sativa subsp. japonica (Rice).